A 51-amino-acid polypeptide reads, in one-letter code: Insulin (51 aa).

3 disulfide bridges follow: Cys7-Cys37, Cys19-Cys50, and Cys36-Cys41.

The protein belongs to the insulin family. As to quaternary structure, heterodimer of a B chain and an A chain linked by two disulfide bonds.

Its subcellular location is the secreted. In terms of biological role, insulin decreases blood glucose concentration. It increases cell permeability to monosaccharides, amino acids and fatty acids. It accelerates glycolysis, the pentose phosphate cycle, and glycogen synthesis in liver. The polypeptide is Insulin (INS) (Elephas maximus (Indian elephant)).